The following is a 141-amino-acid chain: Large ribosomal subunit protein uL11 (141 aa).

Residues 1 to 23 (MAKQVTGQAKFQVPGGQATPAPP) are disordered.

Belongs to the universal ribosomal protein uL11 family. In terms of assembly, part of the ribosomal stalk of the 50S ribosomal subunit. Interacts with L10 and the large rRNA to form the base of the stalk. L10 forms an elongated spine to which L12 dimers bind in a sequential fashion forming a multimeric L10(L12)X complex. One or more lysine residues are methylated.

Forms part of the ribosomal stalk which helps the ribosome interact with GTP-bound translation factors. The protein is Large ribosomal subunit protein uL11 of Rhodopirellula baltica (strain DSM 10527 / NCIMB 13988 / SH1).